A 282-amino-acid polypeptide reads, in one-letter code: 2-dehydro-3-deoxyphosphooctonate aldolase (282 aa).

The protein belongs to the KdsA family.

Its subcellular location is the cytoplasm. The catalysed reaction is D-arabinose 5-phosphate + phosphoenolpyruvate + H2O = 3-deoxy-alpha-D-manno-2-octulosonate-8-phosphate + phosphate. It functions in the pathway carbohydrate biosynthesis; 3-deoxy-D-manno-octulosonate biosynthesis; 3-deoxy-D-manno-octulosonate from D-ribulose 5-phosphate: step 2/3. It participates in bacterial outer membrane biogenesis; lipopolysaccharide biosynthesis. This Agrobacterium fabrum (strain C58 / ATCC 33970) (Agrobacterium tumefaciens (strain C58)) protein is 2-dehydro-3-deoxyphosphooctonate aldolase.